A 222-amino-acid polypeptide reads, in one-letter code: E3 ubiquitin-protein ligase RNF138 (222 aa).

The RING-type zinc finger occupies C17–R57. Zn(2+) is bound by residues C85, C88, H100, and C104. The C2HC RNF-type zinc-finger motif lies at C85–C104. 2 consecutive C2H2-type zinc fingers follow at residues Y134–H157 and M164–H192. The UIM domain maps to I202–I220.

As to quaternary structure, interacts with nlk.2 (via C-terminus) and ube2k. Auto-ubiquitinated.

It is found in the chromosome. It catalyses the reaction S-ubiquitinyl-[E2 ubiquitin-conjugating enzyme]-L-cysteine + [acceptor protein]-L-lysine = [E2 ubiquitin-conjugating enzyme]-L-cysteine + N(6)-ubiquitinyl-[acceptor protein]-L-lysine.. It participates in protein modification; protein ubiquitination. Its function is as follows. E3 ubiquitin-protein ligase involved in DNA damage response by promoting DNA resection and homologous recombination. Recruited to sites of double-strand breaks following DNA damage and specifically promotes double-strand break repair via homologous recombination. Together with nlk.2, involved in the ubiquitination and degradation of TCF/LEF. Also exhibits auto-ubiquitination activity in combination with ube2k. May act as a negative regulator in the Wnt/beta-catenin-mediated signaling pathway. The protein is E3 ubiquitin-protein ligase RNF138 (rnf138) of Xenopus laevis (African clawed frog).